The primary structure comprises 230 residues: Ribonuclease 3 (230 aa).

The RNase III domain maps to 5–125; that stretch reads YSRFYNILGY…VIGAIYLDSD (121 aa). Glu40 serves as a coordination point for Mg(2+). The active site involves Asp44. Residues Asp111 and Glu114 each contribute to the Mg(2+) site. The active site involves Glu114. The 71-residue stretch at 153–223 folds into the DRBM domain; it reads DSKSKLQEIL…AEKMIEMLSQ (71 aa).

The protein belongs to the ribonuclease III family. As to quaternary structure, homodimer. It depends on Mg(2+) as a cofactor.

Its subcellular location is the cytoplasm. The enzyme catalyses Endonucleolytic cleavage to 5'-phosphomonoester.. Digests double-stranded RNA. Involved in the processing of primary rRNA transcript to yield the immediate precursors to the large and small rRNAs (23S and 16S). Processes some mRNAs, and tRNAs when they are encoded in the rRNA operon. Processes pre-crRNA and tracrRNA of type II CRISPR loci if present in the organism. The protein is Ribonuclease 3 of Francisella tularensis subsp. tularensis (strain WY96-3418).